The chain runs to 780 residues: Zinc finger and SCAN domain-containing protein 10 (780 aa).

Residues 1–38 (MLGESVPAAVEQEQLGEVKLEEEEAVSPEDPRRPESRL) are disordered. The segment covering 29–38 (EDPRRPESRL) has biased composition (basic and acidic residues). An SCAN box domain is found at 56–126 (MGPRASLSRL…LLLEGIHREP (71 aa)). Disordered stretches follow at residues 153 to 237 (GCAS…SRDQ) and 255 to 324 (KAWP…GSLL). 2 positions are modified to phosphoserine: Ser162 and Ser208. Residues 202-224 (SSKQPLSPGPQKTFQALQESSPQ) are compositionally biased toward polar residues. A Phosphothreonine modification is found at Thr268. Residues 268–280 (TPDKEEFKQEEPK) show a composition bias toward basic and acidic residues. 14 consecutive C2H2-type zinc fingers follow at residues 347-370 (FICA…LRSH), 376-398 (FLCL…MRTH), 404-426 (HACH…LLTH), 432-454 (FLCA…LLAH), 476-498 (VLCS…LRIH), 522-544 (FVCS…RRVH), 550-572 (FSCQ…QRVH), 578-600 (YACP…LLTH), 606-628 (HHCT…QRSH), 634-656 (CRCS…QRIH), 662-684 (HACD…RRSH), 690-712 (YSCQ…LATH), 724-746 (QECV…LLVH), and 752-774 (YSCT…LRTH). At Gln483 the chain carries N5-methylglutamine. The tract at residues 492–520 (KRHLRIHARDKDRRSSEGSGSRRRDSDRR) is disordered. A compositionally biased stretch (basic and acidic residues) spans 498-520 (HARDKDRRSSEGSGSRRRDSDRR).

Interacts with POU5F1/OCT4 and SOX2. Post-translationally, methylated at Gln-483 by N6AMT1.

It is found in the nucleus. Functionally, embryonic stem (ES) cell-specific transcription factor required to maintain ES cell pluripotency. Can both activate and /or repress expression of target genes, depending on the context. Specifically binds the 5'-[GA]CGCNNGCG[CT]-3' DNA consensus sequence. Regulates expression of POU5F1/OCT4, ZSCAN4 and ALYREF/THOC4. This chain is Zinc finger and SCAN domain-containing protein 10 (ZSCAN10), found in Homo sapiens (Human).